Consider the following 822-residue polypeptide: MSSKRPCSIVGSFWMLWIWTATSMVARAVILHPNETIFNDFCKKSTTCEVLKYNTCLGSPLPYTHTSLILAEDSETQEEAFEKLAMWSGLRNAPRCWAVIQPLLCAVYMPKCENGKVELPSQHLCQATRNPCSIVERERGWPNFLKCENKEQFPKGCQNEVQKLKFNTSGQCEAPLVKTDIQASWYKDVEGCGIQCDNPLFTEDEHSDMHSYIAVFGTITLLCTFFTLATFLADWKNSNRYPAVILFYVNACFFIGSIGWLAQFMDGARNEIVCKSDNTMRLGEPSSTETLSCVIIFVIVYYSLMSGVIWFVMLTYAWHTSFKALGTTHQPLSGKTSYFHLVTWSIPFILTVAILANSQVDADSVSGICFVGYRYYEYRAGFVLAPIGFVLVIGGYFLIRGVMTLFSIKSNHPGLLSEKAASKINETMLRLGIFGFLAFGFVLITFGCHFYDFFNQAEWERSFREYVLCEANVTIAHQTNKPIPECAIKNRPSLLVGKINLFSMFGTGIAMSTWVWTKATILIWKRTWFRIIGRSDDEPKRIKKSKMIAKAFSKRKELQKDPEKELSFSMHTVSHEGPVAGINFDLNEPSIEMSSAWAQHVTKMVARRGAILPQDISVTPTGTPIPPPEERNKLWMVEAEISPEMMKRKKKKKKRRKEVRPAGPAADEGNPAYHRREFGPSAVPRLPKLPGHRSLVANLWEQQRQQQEEQDMLPGAFPEFRPSCPLPYQDRYGGLGYLRNKPSSLPLANPLTLRDSMQGDLSHFQQSSWQPKGVFRHLGQEASMMDVGRTAVVPRADGRRGVQIHSRTNLMDAELLDADSDF.

Positions Met-1–Ala-28 are cleaved as a signal peptide. Over Val-29 to Tyr-212 the chain is Extracellular. N-linked (GlcNAc...) asparagine glycosylation is present at Asn-34. Disulfide bonds link Cys-42–Cys-157, Cys-48–Cys-112, Cys-56–Cys-105, Cys-96–Cys-132, and Cys-125–Cys-147. One can recognise an FZ domain in the interval Lys-43–Glu-160. A cholesterol-binding site is contributed by Asp-73. Asn-167 is a glycosylation site (N-linked (GlcNAc...) asparagine). Cystine bridges form between Cys-172/Cys-192, Cys-196/Cys-274, and Cys-293/Cys-369. A helical transmembrane segment spans residues Ile-213–Ala-233. At Asp-234 to Tyr-241 the chain is on the cytoplasmic side. Residues Pro-242–Ala-262 traverse the membrane as a helical segment. At Gln-263 to Cys-293 the chain is on the extracellular side. The helical transmembrane segment at Val-294–Leu-314 threads the bilayer. The Cytoplasmic portion of the chain corresponds to Thr-315 to Lys-335. A helical transmembrane segment spans residues Thr-336–Ala-356. Residues Asn-357 to Gly-381 lie on the Extracellular side of the membrane. Tyr-373 provides a ligand contact to cholesterol. Residues Phe-382–Val-402 form a helical membrane-spanning segment. The Cytoplasmic segment spans residues Met-403–Arg-430. The chain crosses the membrane as a helical span at residues Leu-431–Tyr-451. Residues Asp-452–Ser-503 lie on the Extracellular side of the membrane. A disulfide bond links Cys-469 and Cys-486. A glycan (N-linked (GlcNAc...) asparagine) is linked at Asn-472. The chain crosses the membrane as a helical span at residues Met-504–Trp-524. Residues Lys-525–Phe-822 are Cytoplasmic-facing. The disordered stretch occupies residues Met-645–Pro-687. The span at Lys-647–Glu-658 shows a compositional bias: basic residues.

The protein belongs to the G-protein coupled receptor Fz/Smo family. As to quaternary structure, monomer.

It is found in the cell membrane. It localises to the cell projection. Its subcellular location is the cilium. Functionally, g protein-coupled receptor which associates with the patched protein (ptch) to transduce Hedgehog protein signaling. Binding of sonic hedgehog (shh) to its receptor patched prevents inhibition of smoothened (smo) by patched. When active, smo binds to and sequesters protein kinase A catalytic subunit prkaca at the cell membrane, preventing prkaca-mediated phosphorylation of gli transcription factors which releases the gli proteins from prkaca-mediated inhibition and allows for transcriptional activation of Hedgehog signaling pathway target genes. Required for the development of primary and secondary motoneurons but not for the specification of midbrain dopaminergic neurons or development of the medial floor plate. Required for induction of lateral floor plate and posterior motoneurons, anterior neural plate patterning, dorsoventral forebrain patterning, dorsoventral retinal patterning, optic stalk development, and formation of the forebrain primary axonal scaffold. Required to regulate the formation of a subset of cerebellar neurons by limiting wnt1 expression which controls cerebellar expression of transcription factor olig2. Required for development of the pancreas. Required for muscle development. Required for the formation of a single continuous intestinal lumen from multiple discontinuous lumens, probably by regulating remodeling through rab11a-mediated trafficking to facilitate lumen fusion. Required for development of the adenohypophysis. Required for anteroposterior patterning of the otic vesicle. Required for development of the anterior craniofacial skeleton. Required for patterning of the caudal fin. Required during gastrulation and early somitogenesis stages to promote cardiomyocyte formation by regulating the specification of myocardial progenitors. Required for induction of arterial endothelial cell formation by repressing venous cell fate. The chain is Protein smoothened from Danio rerio (Zebrafish).